Reading from the N-terminus, the 340-residue chain is Tetraacyldisaccharide 4'-kinase (340 aa).

50–57 (HGGGAGKT) contacts ATP.

Belongs to the LpxK family.

The enzyme catalyses a lipid A disaccharide + ATP = a lipid IVA + ADP + H(+). The protein operates within glycolipid biosynthesis; lipid IV(A) biosynthesis; lipid IV(A) from (3R)-3-hydroxytetradecanoyl-[acyl-carrier-protein] and UDP-N-acetyl-alpha-D-glucosamine: step 6/6. In terms of biological role, transfers the gamma-phosphate of ATP to the 4'-position of a tetraacyldisaccharide 1-phosphate intermediate (termed DS-1-P) to form tetraacyldisaccharide 1,4'-bis-phosphate (lipid IVA). The sequence is that of Tetraacyldisaccharide 4'-kinase from Rhodopseudomonas palustris (strain BisA53).